The sequence spans 649 residues: Acetyl-coenzyme A synthetase (649 aa).

Residues Arg-190–Arg-193 and Thr-310 contribute to the CoA site. Residues Gly-386–Pro-388, Asp-410–Thr-415, Asp-499, and Arg-514 each bind ATP. Position 522 (Ser-522) interacts with CoA. ATP is bound at residue Arg-525. Residues Val-536, His-538, and Val-541 each contribute to the Mg(2+) site. Arg-583 is a binding site for CoA. The residue at position 608 (Lys-608) is an N6-acetyllysine.

Belongs to the ATP-dependent AMP-binding enzyme family. It depends on Mg(2+) as a cofactor. Post-translationally, acetylated. Deacetylation by the SIR2-homolog deacetylase activates the enzyme.

It catalyses the reaction acetate + ATP + CoA = acetyl-CoA + AMP + diphosphate. Catalyzes the conversion of acetate into acetyl-CoA (AcCoA), an essential intermediate at the junction of anabolic and catabolic pathways. AcsA undergoes a two-step reaction. In the first half reaction, AcsA combines acetate with ATP to form acetyl-adenylate (AcAMP) intermediate. In the second half reaction, it can then transfer the acetyl group from AcAMP to the sulfhydryl group of CoA, forming the product AcCoA. This chain is Acetyl-coenzyme A synthetase, found in Methylorubrum extorquens (strain PA1) (Methylobacterium extorquens).